A 72-amino-acid chain; its full sequence is DNA gyrase inhibitor YacG (72 aa).

Residues cysteine 7, cysteine 10, cysteine 26, and cysteine 30 each contribute to the Zn(2+) site. The tract at residues 44–72 (SIAGEEHTPSSDTARPQLSAEDLALLEQD) is disordered.

Belongs to the DNA gyrase inhibitor YacG family. Interacts with GyrB. Requires Zn(2+) as cofactor.

Inhibits all the catalytic activities of DNA gyrase by preventing its interaction with DNA. Acts by binding directly to the C-terminal domain of GyrB, which probably disrupts DNA binding by the gyrase. The chain is DNA gyrase inhibitor YacG from Tolumonas auensis (strain DSM 9187 / NBRC 110442 / TA 4).